The primary structure comprises 429 residues: Violacein synthase (429 aa).

An FAD-binding site is contributed by 3 to 21; it reads RAIIVGGGLAGGLTAIYLA.

It depends on FAD as a cofactor.

The enzyme catalyses protoviolaceinate + NADPH + O2 + H(+) = violaceinate + NADP(+) + H2O. It carries out the reaction protoviolaceinate + NADH + O2 + H(+) = violaceinate + NAD(+) + H2O. The catalysed reaction is protodeoxyviolaceinate + NADPH + O2 + H(+) = deoxyviolaceinate + NADP(+) + H2O. It catalyses the reaction protodeoxyviolaceinate + NADH + O2 + H(+) = deoxyviolaceinate + NAD(+) + H2O. The protein operates within pigment biosynthesis; violacein biosynthesis. Functionally, catalyzes the hydroxylation of the 16-position of protoviolaceinate and protodeoxyviolaceinate to form violacein and deoxyviolacein, respectively. The protein is Violacein synthase (vioC) of Chromobacterium violaceum (strain ATCC 12472 / DSM 30191 / JCM 1249 / CCUG 213 / NBRC 12614 / NCIMB 9131 / NCTC 9757 / MK).